A 290-amino-acid chain; its full sequence is Lipoyl synthase (290 aa).

7 residues coordinate [4Fe-4S] cluster: cysteine 32, cysteine 37, cysteine 43, cysteine 58, cysteine 62, cysteine 65, and serine 272. Residues 44–261 form the Radical SAM core domain; that stretch reads WGEGTATFMI…KEVAVSLGFK (218 aa).

It belongs to the radical SAM superfamily. Lipoyl synthase family. The cofactor is [4Fe-4S] cluster.

The protein resides in the cytoplasm. The catalysed reaction is [[Fe-S] cluster scaffold protein carrying a second [4Fe-4S](2+) cluster] + N(6)-octanoyl-L-lysyl-[protein] + 2 oxidized [2Fe-2S]-[ferredoxin] + 2 S-adenosyl-L-methionine + 4 H(+) = [[Fe-S] cluster scaffold protein] + N(6)-[(R)-dihydrolipoyl]-L-lysyl-[protein] + 4 Fe(3+) + 2 hydrogen sulfide + 2 5'-deoxyadenosine + 2 L-methionine + 2 reduced [2Fe-2S]-[ferredoxin]. The protein operates within protein modification; protein lipoylation via endogenous pathway; protein N(6)-(lipoyl)lysine from octanoyl-[acyl-carrier-protein]: step 2/2. Its function is as follows. Catalyzes the radical-mediated insertion of two sulfur atoms into the C-6 and C-8 positions of the octanoyl moiety bound to the lipoyl domains of lipoate-dependent enzymes, thereby converting the octanoylated domains into lipoylated derivatives. The chain is Lipoyl synthase from Pyrobaculum aerophilum (strain ATCC 51768 / DSM 7523 / JCM 9630 / CIP 104966 / NBRC 100827 / IM2).